The following is a 63-amino-acid chain: Sperm protamine P1 (63 aa).

The tract at residues 1–63 (MARYRRHSRS…RYSRRGRRRY (63 aa)) is disordered.

Belongs to the protamine P1 family. Testis.

Its subcellular location is the nucleus. It localises to the chromosome. Protamines substitute for histones in the chromatin of sperm during the haploid phase of spermatogenesis. They compact sperm DNA into a highly condensed, stable and inactive complex. The protein is Sperm protamine P1 (PRM1) of Sminthopsis griseoventer (Gray-bellied dunnart).